Consider the following 112-residue polypeptide: Large ribosomal subunit protein mL53 (112 aa).

This sequence belongs to the mitochondrion-specific ribosomal protein mL53 family. Component of the mitochondrial large ribosomal subunit (mt-LSU). Mature mammalian 55S mitochondrial ribosomes consist of a small (28S) and a large (39S) subunit. The 28S small subunit contains a 12S ribosomal RNA (12S mt-rRNA) and 30 different proteins. The 39S large subunit contains a 16S rRNA (16S mt-rRNA), a copy of mitochondrial valine transfer RNA (mt-tRNA(Val)), which plays an integral structural role, and 52 different proteins. mL53 is located at the L7/L12 stalk.

Its subcellular location is the mitochondrion. The sequence is that of Large ribosomal subunit protein mL53 (MRPL53) from Homo sapiens (Human).